A 169-amino-acid chain; its full sequence is Small proline-rich protein 3 (169 aa).

The span at 1–24 (MSSYQQKQTFTPPPQLQQQQVKQP) shows a compositional bias: low complexity. The disordered stretch occupies residues 1–57 (MSSYQQKQTFTPPPQLQQQQVKQPSQPPPQEIFVPTTKEPCHSKVPQPGNTKIPEPG). Residue Ser2 is modified to N-acetylserine. Tandem repeats lie at residues 43 to 50 (SKVPQPGN), 51 to 58 (TKIPEPGC), 59 to 66 (TKVPEPGC), 67 to 74 (TKVPEPGC), 75 to 82 (TKVPEPGC), 83 to 90 (TKVPEPGC), 91 to 98 (TKVPEPGC), 99 to 106 (TKVPEPGY), 107 to 114 (TKVPEPGS), 115 to 122 (IKVPDQGF), 123 to 130 (IKFPEPGA), 131 to 138 (IKVPEQGY), 139 to 146 (TKVPVPGY), and 147 to 154 (TKLPEPCP). The interval 43–154 (SKVPQPGNTK…GYTKLPEPCP (112 aa)) is 14 X 8 AA approximate tandem repeats. Residues 150-169 (PEPCPSTVTPGPAQQKTKQK) are disordered. Residues 155-169 (STVTPGPAQQKTKQK) are compositionally biased toward polar residues.

Its subcellular location is the cytoplasm. Its function is as follows. Cross-linked envelope protein of keratinocytes. The polypeptide is Small proline-rich protein 3 (SPRR3) (Homo sapiens (Human)).